We begin with the raw amino-acid sequence, 305 residues long: Acetaldehyde dehydrogenase (305 aa).

13–16 contacts NAD(+); the sequence is SGNI. Cysteine 128 functions as the Acyl-thioester intermediate in the catalytic mechanism. NAD(+) contacts are provided by residues 159–167 and asparagine 278; that span reads SAGPGTRQN.

Belongs to the acetaldehyde dehydrogenase family.

It catalyses the reaction acetaldehyde + NAD(+) + CoA = acetyl-CoA + NADH + H(+). The polypeptide is Acetaldehyde dehydrogenase (Chloroflexus aurantiacus (strain ATCC 29366 / DSM 635 / J-10-fl)).